The following is a 477-amino-acid chain: Ribosomal RNA small subunit methyltransferase F (477 aa).

Residues 125 to 131 (AAAPGSK), glutamate 149, aspartate 176, and aspartate 194 contribute to the S-adenosyl-L-methionine site. Cysteine 247 functions as the Nucleophile in the catalytic mechanism.

It belongs to the class I-like SAM-binding methyltransferase superfamily. RsmB/NOP family.

It is found in the cytoplasm. It catalyses the reaction cytidine(1407) in 16S rRNA + S-adenosyl-L-methionine = 5-methylcytidine(1407) in 16S rRNA + S-adenosyl-L-homocysteine + H(+). Specifically methylates the cytosine at position 1407 (m5C1407) of 16S rRNA. The sequence is that of Ribosomal RNA small subunit methyltransferase F from Klebsiella pneumoniae (strain 342).